Reading from the N-terminus, the 274-residue chain is Proteasome subunit beta (274 aa).

The propeptide at 1–52 (MADPLGAAGRLPAVFMTPGTSSFADFLSRSAPHLLPGARSGLPGPVTEVAHG) is removed in mature form; by autocatalysis. Thr-53 functions as the Nucleophile in the catalytic mechanism.

The protein belongs to the peptidase T1B family. In terms of assembly, the 20S proteasome core is composed of 14 alpha and 14 beta subunits that assemble into four stacked heptameric rings, resulting in a barrel-shaped structure. The two inner rings, each composed of seven catalytic beta subunits, are sandwiched by two outer rings, each composed of seven alpha subunits. The catalytic chamber with the active sites is on the inside of the barrel. Has a gated structure, the ends of the cylinder being occluded by the N-termini of the alpha-subunits. Is capped by the proteasome-associated ATPase, ARC.

Its subcellular location is the cytoplasm. The catalysed reaction is Cleavage of peptide bonds with very broad specificity.. Its pathway is protein degradation; proteasomal Pup-dependent pathway. Its activity is regulated as follows. The formation of the proteasomal ATPase ARC-20S proteasome complex, likely via the docking of the C-termini of ARC into the intersubunit pockets in the alpha-rings, may trigger opening of the gate for substrate entry. Interconversion between the open-gate and close-gate conformations leads to a dynamic regulation of the 20S proteasome proteolysis activity. Component of the proteasome core, a large protease complex with broad specificity involved in protein degradation. This Frankia casuarinae (strain DSM 45818 / CECT 9043 / HFP020203 / CcI3) protein is Proteasome subunit beta.